We begin with the raw amino-acid sequence, 86 residues long: Exodeoxyribonuclease 7 small subunit (86 aa).

The segment at 1-27 is disordered; it reads MQDELFETEKIPPKNTKNAKNAPKKSF.

It belongs to the XseB family. In terms of assembly, heterooligomer composed of large and small subunits.

Its subcellular location is the cytoplasm. It catalyses the reaction Exonucleolytic cleavage in either 5'- to 3'- or 3'- to 5'-direction to yield nucleoside 5'-phosphates.. In terms of biological role, bidirectionally degrades single-stranded DNA into large acid-insoluble oligonucleotides, which are then degraded further into small acid-soluble oligonucleotides. In Helicobacter pylori (strain G27), this protein is Exodeoxyribonuclease 7 small subunit.